We begin with the raw amino-acid sequence, 176 residues long: Large ribosomal subunit protein bL17m (176 aa).

The N-terminal 8 residues, 1–8 (MRLSLAAA), are a transit peptide targeting the mitochondrion.

This sequence belongs to the bacterial ribosomal protein bL17 family. Component of the mitochondrial ribosome large subunit (39S) which comprises a 16S rRNA and about 50 distinct proteins.

It is found in the mitochondrion. This Rattus norvegicus (Rat) protein is Large ribosomal subunit protein bL17m (Mrpl17).